A 454-amino-acid polypeptide reads, in one-letter code: tRNA modification GTPase MnmE (454 aa).

Positions 23, 80, and 120 each coordinate (6S)-5-formyl-5,6,7,8-tetrahydrofolate. In terms of domain architecture, TrmE-type G spans 216–377; it reads GMKVVIAGRP…LRNHLKQSMG (162 aa). Asn-226 is a K(+) binding site. GTP contacts are provided by residues 226-231, 245-251, 270-273, 335-338, and 358-360; these read NAGKSS, TDIAGTT, DTAG, NKAD, and SAR. Mg(2+) is bound at residue Ser-230. The K(+) site is built by Thr-245, Ile-247, and Thr-250. Thr-251 is a Mg(2+) binding site. Lys-454 contacts (6S)-5-formyl-5,6,7,8-tetrahydrofolate.

The protein belongs to the TRAFAC class TrmE-Era-EngA-EngB-Septin-like GTPase superfamily. TrmE GTPase family. Homodimer. Heterotetramer of two MnmE and two MnmG subunits. It depends on K(+) as a cofactor.

The protein localises to the cytoplasm. In terms of biological role, exhibits a very high intrinsic GTPase hydrolysis rate. Involved in the addition of a carboxymethylaminomethyl (cmnm) group at the wobble position (U34) of certain tRNAs, forming tRNA-cmnm(5)s(2)U34. The protein is tRNA modification GTPase MnmE of Shigella flexneri serotype 5b (strain 8401).